A 278-amino-acid polypeptide reads, in one-letter code: Bis(5'-nucleosyl)-tetraphosphatase, symmetrical (278 aa).

It belongs to the Ap4A hydrolase family.

The catalysed reaction is P(1),P(4)-bis(5'-adenosyl) tetraphosphate + H2O = 2 ADP + 2 H(+). Functionally, hydrolyzes diadenosine 5',5'''-P1,P4-tetraphosphate to yield ADP. The chain is Bis(5'-nucleosyl)-tetraphosphatase, symmetrical from Nitrosococcus oceani (strain ATCC 19707 / BCRC 17464 / JCM 30415 / NCIMB 11848 / C-107).